The chain runs to 350 residues: Arabinogalactan endo-beta-1,4-galactanase (350 aa).

Residues 1–16 (MFASLLLAALPLLTHA) form the signal peptide. N-linked (GlcNAc...) asparagine glycosylation is present at Asn-128. Catalysis depends on Glu-152, which acts as the Proton donor. Glu-262 acts as the Nucleophile in catalysis.

Belongs to the glycosyl hydrolase 53 family. Post-translationally, glycosylated.

It catalyses the reaction The enzyme specifically hydrolyzes (1-&gt;4)-beta-D-galactosidic linkages in type I arabinogalactans.. The sequence is that of Arabinogalactan endo-beta-1,4-galactanase (gal1) from Aspergillus aculeatus.